A 415-amino-acid chain; its full sequence is Glutamyl-tRNA reductase (415 aa).

Substrate contacts are provided by residues 49–52 (TCNR), S104, 109–111 (EPQ), and Q115. C50 (nucleophile) is an active-site residue. Residue 184 to 189 (GAGEMI) participates in NADP(+) binding.

The protein belongs to the glutamyl-tRNA reductase family. In terms of assembly, homodimer.

The catalysed reaction is (S)-4-amino-5-oxopentanoate + tRNA(Glu) + NADP(+) = L-glutamyl-tRNA(Glu) + NADPH + H(+). It participates in porphyrin-containing compound metabolism; protoporphyrin-IX biosynthesis; 5-aminolevulinate from L-glutamyl-tRNA(Glu): step 1/2. Functionally, catalyzes the NADPH-dependent reduction of glutamyl-tRNA(Glu) to glutamate 1-semialdehyde (GSA). This chain is Glutamyl-tRNA reductase, found in Neisseria meningitidis serogroup B (strain ATCC BAA-335 / MC58).